Here is a 532-residue protein sequence, read N- to C-terminus: Putative cysteine desulfurase PbSufS (532 aa).

The N-terminal stretch at 1–18 (MNNESICILLLLFVKITS) is a signal peptide. K286 is subject to N6-(pyridoxal phosphate)lysine. C480 functions as the Cysteine persulfide intermediate in the catalytic mechanism.

Belongs to the class-V pyridoxal-phosphate-dependent aminotransferase family. Csd subfamily. Monomer. Interacts with SufE; interaction enhances cysteine desulfurase activity of SufS. Requires pyridoxal 5'-phosphate as cofactor.

Its subcellular location is the plastid. It is found in the apicoplast. The enzyme catalyses (sulfur carrier)-H + L-cysteine = (sulfur carrier)-SH + L-alanine. It functions in the pathway cofactor biosynthesis; iron-sulfur cluster biosynthesis. Functionally, catalyzes sulfur activation and mobilization in sulfur mobilization (SUF) pathway for iron-sulfur (Fe-S) cluster biogenesis. Active when in complex with a partner protein SufE. Required for apicoplast maintenance. Plays a role in the development of sporozoites in oocysts in mosquitoes. The polypeptide is Putative cysteine desulfurase PbSufS (Plasmodium berghei (strain Anka)).